We begin with the raw amino-acid sequence, 390 residues long: MNALRHTISLVSLGTFQLVRRTRGPHARGFLLGTGLGLASFSAVTYAHSAEAVDPKVNGVQMNTSRFMAEPITDSKALLGDKENMRHRMEILIMEIQAEFCRALEAEENCGQKFKVDRWERPEGGGGITCVLQDGDVFEKAGVNISVVTGSLPPAAVQQMRARGKNLKEGASLPFFASGVSAVIHPRNPHVPTIHFNYRYFEVETAKGEKQWWFGGGTDLTPYYLCEKDASHFHQTLKSACDEHDPTYYPRFKKWCDDYFRIKHRNESRGIGGIFFDDIDSPNQEAAFNFVSSCARAVIPSYVPLVRKHKNREYGNNERQWQLLRRGRYVEFNLIYDRGTKFGLYTPGARYESILMSLPLHARWEYMHEPKSQSEEGKLMKVLKNPKDWV.

Residues 131 to 140 form an important for dimerization region; it reads VLQDGDVFEK. S181 lines the substrate pocket. H195 acts as the Proton donor in catalysis. Residues 197–199 and 348–353 each bind substrate; these read NYR and GARYES. The segment at 329–365 is important for dimerization; sequence YVEFNLIYDRGTKFGLYTPGARYESILMSLPLHARWE.

The protein belongs to the aerobic coproporphyrinogen-III oxidase family. Homodimer.

The catalysed reaction is coproporphyrinogen III + O2 + 2 H(+) = protoporphyrinogen IX + 2 CO2 + 2 H2O. It functions in the pathway porphyrin-containing compound metabolism; protoporphyrin-IX biosynthesis; protoporphyrinogen-IX from coproporphyrinogen-III (O2 route): step 1/1. In terms of biological role, involved in the heme biosynthesis. Catalyzes the aerobic oxidative decarboxylation of propionate groups of rings A and B of coproporphyrinogen-III to yield the vinyl groups in protoporphyrinogen-IX. The sequence is that of Oxygen-dependent coproporphyrinogen-III oxidase (Coprox) from Drosophila melanogaster (Fruit fly).